Consider the following 299-residue polypeptide: Regucalcin (299 aa).

An a divalent metal cation-binding site is contributed by Glu-18. Substrate is bound by residues Arg-101, Asn-103, and Glu-121. Lys-144 carries the N6-succinyllysine modification. Residues Asn-154 and Asp-204 each contribute to the a divalent metal cation site. Residue Asp-204 is the Proton donor/acceptor of the active site. Lys-244 and Lys-253 each carry N6-succinyllysine. The residue at position 268 (Ser-268) is a Phosphoserine.

It belongs to the SMP-30/CGR1 family. As to quaternary structure, monomer. Zn(2+) serves as cofactor. The cofactor is Mn(2+). It depends on Ca(2+) as a cofactor. Mg(2+) is required as a cofactor. Requires Co(2+) as cofactor. In terms of processing, the N-terminus is blocked. As to expression, detected in liver (at protein level). Hepatocytes and renal proximal tubular epithelium.

The protein localises to the cytoplasm. It catalyses the reaction D-glucono-1,5-lactone + H2O = D-gluconate + H(+). The protein operates within cofactor biosynthesis; L-ascorbate biosynthesis via UDP-alpha-D-glucuronate pathway; L-ascorbate from UDP-alpha-D-glucuronate: step 3/4. Its function is as follows. Gluconolactonase with low activity towards other sugar lactones, including gulonolactone and galactonolactone. Catalyzes a key step in ascorbic acid (vitamin C) biosynthesis. Can also hydrolyze diisopropyl phosphorofluoridate and phenylacetate (in vitro). Calcium-binding protein. Modulates Ca(2+) signaling, and Ca(2+)-dependent cellular processes and enzyme activities. The polypeptide is Regucalcin (Rgn) (Rattus norvegicus (Rat)).